The sequence spans 278 residues: Para-Rep C1 (278 aa).

One can recognise a CRESS-DNA virus Rep endonuclease domain in the interval 1–95 (MACSNWVFTR…VAGPWSYGDL (95 aa)). An RCR-1 motif is present at residues 8 to 11 (FTRN). Positions 33 and 39 each coordinate a divalent metal cation. The short motif at 39–41 (HIQ) is the RCR-2 element. A Nuclear localization signal motif is present at residues 48–69 (KKARFSTVKEIIGGNPHVEKMK). Catalysis depends on Tyr-78, which acts as the For DNA cleavage activity. Positions 78–81 (YVQK) match the RCR-3 motif. Glu-83 provides a ligand contact to a divalent metal cation. The Nuclear localization signal motif lies at 95–101 (LLKRGSH). Residue 176 to 178 (GKS) coordinates ATP.

This sequence belongs to the nanoviridea/circoviridae replication-associated protein family. In terms of assembly, homooligomer (Potential). Rep binds to repeated DNA motifs (iterons). It depends on Mg(2+) as a cofactor. The cofactor is Mn(2+).

It is found in the host nucleus. It carries out the reaction ATP + H2O = ADP + phosphate + H(+). Initiates and terminates the replication only of its own subviral DNA molecule. The closed circular ssDNA genome is first converted to a superhelical dsDNA. Rep binds a specific hairpin at the genome origin of replication. Introduces an endonucleolytic nick within the intergenic region of the genome, thereby initiating the rolling circle replication (RCR). Following cleavage, binds covalently to the 5'-phosphate of DNA as a tyrosyl ester. The cleavage gives rise to a free 3'-OH that serves as a primer for the cellular DNA polymerase. The polymerase synthesizes the (+) strand DNA by rolling circle mechanism. After one round of replication, a Rep-catalyzed nucleotidyl transfer reaction releases a circular single-stranded virus genome, thereby terminating the replication. Displays origin-specific DNA cleavage, nucleotidyl transferase, ATPase and helicase activities. In Faba bean necrotic yellows C1 alphasatellite (FBNYC1A), this protein is Para-Rep C1 (C1).